The primary structure comprises 162 residues: Protein-export protein SecB (162 aa).

This sequence belongs to the SecB family. In terms of assembly, homotetramer, a dimer of dimers. One homotetramer interacts with 1 SecA dimer.

The protein localises to the cytoplasm. One of the proteins required for the normal export of preproteins out of the cell cytoplasm. It is a molecular chaperone that binds to a subset of precursor proteins, maintaining them in a translocation-competent state. It also specifically binds to its receptor SecA. This is Protein-export protein SecB from Legionella pneumophila (strain Paris).